We begin with the raw amino-acid sequence, 222 residues long: Ribonuclease S-3 (222 aa).

An N-terminal signal peptide occupies residues 1-22 (MFRLQLISAFFILLFSLSPVSA). A disulfide bridge links C38 with C44. A glycan (N-linked (GlcNAc...) asparagine) is linked at N50. H54 acts as the Proton donor in catalysis. Residues H54, 92–93 (QM), 109–110 (HE), and 113–114 (RH) each bind RNA. Cystine bridges form between C68–C117, C177–C210, and C193–C204. Residue E110 is part of the active site. H114 (proton acceptor) is an active-site residue.

Belongs to the RNase T2 family.

Its subcellular location is the secreted. It is found in the extracellular space. It carries out the reaction a ribonucleotidyl-ribonucleotide-RNA + H2O = a 3'-end 3'-phospho-ribonucleotide-RNA + a 5'-end dephospho-ribonucleoside-RNA + H(+). In terms of biological role, self-incompatibility (SI) is the inherited ability of a flowering plant to prevent self-fertilization by discriminating between self and non-self pollen during pollination. In many species, self-incompatibility is controlled by the single, multiallelic locus S. The sequence is that of Ribonuclease S-3 (S3) from Petunia hybrida (Petunia).